The following is a 265-amino-acid chain: DNA-binding dual transcriptional regulator Rns (265 aa).

Positions 20 and 75 each coordinate decanoate. Positions Asp164 to Tyr261 constitute an HTH araC/xylS-type domain. 2 DNA-binding regions (H-T-H motif) span residues Gly181–Asn202 and Ile228–Tyr251.

As to quaternary structure, homodimer; each subunit binds one decanoate molecule.

The protein resides in the cytoplasm. With respect to regulation, rns-dependent expression of pilins and outer membrane proteins CexE-alpha and CexE-epsilon are inhibited in vivo by decanoic acid (decanoate); has no effect on expression of DnaK or flagellins. Decanoate relieves Rns-dependent repression of nlpA. In terms of biological role, a transcription factor required for the expression of the CS1 and CS2 adhesins of enterotoxigenic E.coli. Required for expression of pilins and some outer membrane lipoproteins. Represses expression of nlpA. This chain is DNA-binding dual transcriptional regulator Rns, found in Escherichia coli.